We begin with the raw amino-acid sequence, 101 residues long: NADH-quinone oxidoreductase subunit K 1 (101 aa).

The next 3 helical transmembrane spans lie at 4-24 (IGTM…TVGV), 31-51 (VVIL…LVAF), and 64-84 (IFVM…VIAF).

It belongs to the complex I subunit 4L family. As to quaternary structure, NDH-1 is composed of 14 different subunits. Subunits NuoA, H, J, K, L, M, N constitute the membrane sector of the complex.

The protein localises to the cell inner membrane. It carries out the reaction a quinone + NADH + 5 H(+)(in) = a quinol + NAD(+) + 4 H(+)(out). Its function is as follows. NDH-1 shuttles electrons from NADH, via FMN and iron-sulfur (Fe-S) centers, to quinones in the respiratory chain. The immediate electron acceptor for the enzyme in this species is believed to be ubiquinone. Couples the redox reaction to proton translocation (for every two electrons transferred, four hydrogen ions are translocated across the cytoplasmic membrane), and thus conserves the redox energy in a proton gradient. The sequence is that of NADH-quinone oxidoreductase subunit K 1 from Koribacter versatilis (strain Ellin345).